Here is a 123-residue protein sequence, read N- to C-terminus: Protein Wnt-7 (123 aa).

A lipid anchor (O-palmitoleoyl serine; by PORCN) is attached at serine 1. An intrachain disulfide couples cysteine 89 to cysteine 104. A glycan (N-linked (GlcNAc...) asparagine) is linked at asparagine 90.

The protein belongs to the Wnt family. In terms of processing, palmitoleoylation is required for efficient binding to frizzled receptors. Depalmitoleoylation leads to Wnt signaling pathway inhibition.

It is found in the secreted. It localises to the extracellular space. The protein resides in the extracellular matrix. Ligand for members of the frizzled family of seven transmembrane receptors. Probable developmental protein. May be a signaling molecule which affects the development of discrete regions of tissues. Is likely to signal over only few cell diameters. This Evasterias troschelii (Mottled sea star) protein is Protein Wnt-7 (WNT-7).